A 152-amino-acid chain; its full sequence is Ribosomal RNA large subunit methyltransferase H (152 aa).

Residues Leu-70, Gly-102, and 120–125 (LSPMTF) contribute to the S-adenosyl-L-methionine site.

It belongs to the RNA methyltransferase RlmH family. As to quaternary structure, homodimer.

Its subcellular location is the cytoplasm. It catalyses the reaction pseudouridine(1915) in 23S rRNA + S-adenosyl-L-methionine = N(3)-methylpseudouridine(1915) in 23S rRNA + S-adenosyl-L-homocysteine + H(+). Its function is as follows. Specifically methylates the pseudouridine at position 1915 (m3Psi1915) in 23S rRNA. This chain is Ribosomal RNA large subunit methyltransferase H, found in Pelobacter propionicus (strain DSM 2379 / NBRC 103807 / OttBd1).